A 134-amino-acid chain; its full sequence is Acyl carrier protein, mitochondrial (134 aa).

A mitochondrion-targeting transit peptide spans 1–46 (MFRTAALTAARVARPAVASAVRAGVARPAFVQAVPKVAAFQAVRFY). Residues 55–131 (DEVFSRIAQV…KAVEYILSQP (77 aa)) enclose the Carrier domain. At serine 91 the chain carries O-(pantetheine 4'-phosphoryl)serine.

Belongs to the acyl carrier protein (ACP) family. Complex I is composed of about 30 different subunits. Post-translationally, 4'-phosphopantetheine is transferred from CoA to a specific serine of apo-ACP by acpS. This modification is essential for activity because fatty acids are bound in thioester linkage to the sulfhydryl of the prosthetic group.

It is found in the mitochondrion. The protein operates within lipid metabolism; fatty acid biosynthesis. Functionally, carrier of the growing fatty acid chain in fatty acid biosynthesis. May be involved in the synthesis of very-long-chain fatty acids. Accessory and non-catalytic subunit of the mitochondrial membrane respiratory chain NADH dehydrogenase (Complex I), which functions in the transfer of electrons from NADH to the respiratory chain. This chain is Acyl carrier protein, mitochondrial (nuo-12), found in Neurospora crassa (strain ATCC 24698 / 74-OR23-1A / CBS 708.71 / DSM 1257 / FGSC 987).